Consider the following 276-residue polypeptide: uncharacterized protein (276 aa).

Residues 1-4 constitute a propeptide, leader sequence; sequence MNRG. Residue M5 is modified to N-methylmethionine. Residues 5-26 traverse the membrane as a helical segment; sequence MTLIELLVALALSIILSLGLYY.

The protein resides in the membrane. This is an uncharacterized protein from Aquifex aeolicus (strain VF5).